A 58-amino-acid polypeptide reads, in one-letter code: UPF0391 membrane protein Shew185_1413 (58 aa).

A run of 2 helical transmembrane segments spans residues 6–26 (LVFLVVAVIAGLFGFTGIAGA) and 28–48 (AGIAKIIFFLFIVLLVISLLI).

The protein belongs to the UPF0391 family.

The protein localises to the cell membrane. The sequence is that of UPF0391 membrane protein Shew185_1413 from Shewanella baltica (strain OS185).